The sequence spans 360 residues: Phospho-N-acetylmuramoyl-pentapeptide-transferase (360 aa).

10 helical membrane-spanning segments follow: residues I27 to W47, T73 to L93, S94 to V114, W132 to G152, V168 to S188, G199 to T219, A236 to F256, V263 to L283, F288 to V308, and V338 to K358.

The protein belongs to the glycosyltransferase 4 family. MraY subfamily. It depends on Mg(2+) as a cofactor.

It localises to the cell inner membrane. It catalyses the reaction UDP-N-acetyl-alpha-D-muramoyl-L-alanyl-gamma-D-glutamyl-meso-2,6-diaminopimeloyl-D-alanyl-D-alanine + di-trans,octa-cis-undecaprenyl phosphate = di-trans,octa-cis-undecaprenyl diphospho-N-acetyl-alpha-D-muramoyl-L-alanyl-D-glutamyl-meso-2,6-diaminopimeloyl-D-alanyl-D-alanine + UMP. The protein operates within cell wall biogenesis; peptidoglycan biosynthesis. Functionally, catalyzes the initial step of the lipid cycle reactions in the biosynthesis of the cell wall peptidoglycan: transfers peptidoglycan precursor phospho-MurNAc-pentapeptide from UDP-MurNAc-pentapeptide onto the lipid carrier undecaprenyl phosphate, yielding undecaprenyl-pyrophosphoryl-MurNAc-pentapeptide, known as lipid I. In Pectobacterium atrosepticum (strain SCRI 1043 / ATCC BAA-672) (Erwinia carotovora subsp. atroseptica), this protein is Phospho-N-acetylmuramoyl-pentapeptide-transferase.